The primary structure comprises 719 residues: Capsid protein (719 aa).

Residues 647–678 (GDALPSRERKRQAWQDSTSEETESEAEAQEEK) form a disordered region. Positions 664–674 (TSEETESEAEA) are enriched in acidic residues.

This sequence belongs to the anelloviridae capsid protein family.

It localises to the virion. Its function is as follows. Self assemble to form an icosahedral capsid. The protein is Capsid protein of Torque teno virus (isolate Human/Germany/KAV/2001) (TTV).